The following is a 280-amino-acid chain: Pupal cuticle protein 36a (280 aa).

Residues 1-15 (MKLFVLAAVLGVCLA) form the signal peptide. Residues 135–198 (AEGFAYDFET…SQGAHLPTPP (64 aa)) enclose the Chitin-binding type R&amp;R domain. The segment at 258–280 (GAGRAGGTATSASEAPTTTIRLM) is disordered.

The polypeptide is Pupal cuticle protein 36a (PCP36a) (Manduca sexta (Tobacco hawkmoth)).